A 132-amino-acid chain; its full sequence is Small ribosomal subunit protein uS8 (132 aa).

This sequence belongs to the universal ribosomal protein uS8 family. Part of the 30S ribosomal subunit. Contacts proteins S5 and S12.

Its function is as follows. One of the primary rRNA binding proteins, it binds directly to 16S rRNA central domain where it helps coordinate assembly of the platform of the 30S subunit. The sequence is that of Small ribosomal subunit protein uS8 from Clostridium botulinum (strain ATCC 19397 / Type A).